The sequence spans 120 residues: Proteinase inhibitor (120 aa).

An N-terminal signal peptide occupies residues 1–19; it reads MKQLIIATLLSALSGGCMA. A disulfide bridge connects residues Cys43 and Cys65.

Belongs to the protease inhibitor I38 family. In terms of assembly, monomer.

It localises to the periplasm. In terms of biological role, inhibitor of the extracellular proteases A, B, and C of E.chrysanthemi and the S.marcescens 50 kDa extracellular protease. It forms a non-covalent bond with the proteases and may prevent autocatalytic cleavage of the proteases zymogen in the periplasm. The polypeptide is Proteinase inhibitor (inh) (Dickeya chrysanthemi (Pectobacterium chrysanthemi)).